Here is an 85-residue protein sequence, read N- to C-terminus: MKLLLLLTISASMLIEGLVNADGYIRGGDGCKVSCVINHVFCDNECKAAGGSYGYCWAWGLACWCEGLPAEREWDYETDTCGGKK.

The first 21 residues, 1-21 (MKLLLLLTISASMLIEGLVNA), serve as a signal peptide directing secretion. Positions 22–82 (DGYIRGGDGC…EWDYETDTCG (61 aa)) constitute an LCN-type CS-alpha/beta domain. Intrachain disulfides connect Cys-31–Cys-81, Cys-35–Cys-56, Cys-42–Cys-63, and Cys-46–Cys-65. Residue Gly-82 is modified to Glycine amide.

Belongs to the long (4 C-C) scorpion toxin superfamily. Sodium channel inhibitor family. Beta subfamily. In terms of tissue distribution, expressed by the venom gland.

Its subcellular location is the secreted. Functionally, depressant insect beta-toxins cause a transient contraction paralysis followed by a slow flaccid paralysis. They bind voltage-independently at site-4 of sodium channels (Nav) and block action potentials, primarily by depolarizing the axonal membrane and suppressing the sodium current. This depressant toxin is active only on insects. It is found in a relatively small amount in the venom. This is Beta-insect depressant toxin Lqh-dprIT3h from Leiurus hebraeus (Hebrew deathstalker scorpion).